A 443-amino-acid chain; its full sequence is Ribosomal protein uS12 methylthiotransferase RimO (443 aa).

The MTTase N-terminal domain maps to 5-115 (PNIGFISLGC…VMQHVHKYVP (111 aa)). Residues cysteine 14, cysteine 50, cysteine 79, cysteine 147, cysteine 151, and cysteine 154 each coordinate [4Fe-4S] cluster. The Radical SAM core domain occupies 133–374 (LTPKHYAYLK…MQVQQRISVA (242 aa)). A TRAM domain is found at 377-443 (QQKIGKTLAI…ADEYDLWGTY (67 aa)).

Belongs to the methylthiotransferase family. RimO subfamily. It depends on [4Fe-4S] cluster as a cofactor.

It localises to the cytoplasm. The enzyme catalyses L-aspartate(89)-[ribosomal protein uS12]-hydrogen + (sulfur carrier)-SH + AH2 + 2 S-adenosyl-L-methionine = 3-methylsulfanyl-L-aspartate(89)-[ribosomal protein uS12]-hydrogen + (sulfur carrier)-H + 5'-deoxyadenosine + L-methionine + A + S-adenosyl-L-homocysteine + 2 H(+). In terms of biological role, catalyzes the methylthiolation of an aspartic acid residue of ribosomal protein uS12. The sequence is that of Ribosomal protein uS12 methylthiotransferase RimO from Haemophilus ducreyi (strain 35000HP / ATCC 700724).